We begin with the raw amino-acid sequence, 342 residues long: Ribosomal RNA small subunit methyltransferase H (342 aa).

Residues 43–45 (GGY), Asp-61, Phe-87, Asp-108, and Gln-115 each bind S-adenosyl-L-methionine. A disordered region spans residues 322–342 (ALDEASDGMNLPPLAELEKSR).

This sequence belongs to the methyltransferase superfamily. RsmH family.

It is found in the cytoplasm. It carries out the reaction cytidine(1402) in 16S rRNA + S-adenosyl-L-methionine = N(4)-methylcytidine(1402) in 16S rRNA + S-adenosyl-L-homocysteine + H(+). In terms of biological role, specifically methylates the N4 position of cytidine in position 1402 (C1402) of 16S rRNA. In Hyphomonas neptunium (strain ATCC 15444), this protein is Ribosomal RNA small subunit methyltransferase H.